A 561-amino-acid chain; its full sequence is Magnesium-chelatase 60 kDa subunit (561 aa).

Disordered regions lie at residues proline 234–aspartate 268 and arginine 298–glycine 324. Over residues glutamate 237–proline 249 the composition is skewed to pro residues. Positions glutamate 250 to aspartate 265 are enriched in acidic residues. The segment covering arginine 314–lysine 323 has biased composition (basic residues). Positions valine 379–leucine 559 constitute a VWFA domain.

It belongs to the Mg-chelatase subunits D/I family.

The enzyme catalyses protoporphyrin IX + Mg(2+) + ATP + H2O = Mg-protoporphyrin IX + ADP + phosphate + 3 H(+). The protein operates within porphyrin-containing compound metabolism; bacteriochlorophyll biosynthesis. Functionally, involved in bacteriochlorophyll biosynthesis; introduces a magnesium ion into protoporphyrin IX to yield Mg-protoporphyrin IX. This is Magnesium-chelatase 60 kDa subunit (bchD) from Rhodobacter capsulatus (strain ATCC BAA-309 / NBRC 16581 / SB1003).